The chain runs to 76 residues: Acyl carrier protein (76 aa).

A Carrier domain is found at 1–76; that stretch reads MSIEERVKKI…SAIDYVQNNQ (76 aa). Position 36 is an O-(pantetheine 4'-phosphoryl)serine (Ser-36).

It belongs to the acyl carrier protein (ACP) family. 4'-phosphopantetheine is transferred from CoA to a specific serine of apo-ACP by AcpS. This modification is essential for activity because fatty acids are bound in thioester linkage to the sulfhydryl of the prosthetic group.

Its subcellular location is the cytoplasm. It participates in lipid metabolism; fatty acid biosynthesis. Its function is as follows. Carrier of the growing fatty acid chain in fatty acid biosynthesis. The chain is Acyl carrier protein from Pasteurella multocida (strain Pm70).